The chain runs to 451 residues: Probable beta-1,4-xylosyltransferase GT43E (451 aa).

The Cytoplasmic portion of the chain corresponds to 1–88 (MVSSRRNTGG…SKSRGLSCKR (88 aa)). The chain crosses the membrane as a helical; Signal-anchor for type II membrane protein span at residues 89-109 (LAFHLFVCFMVGIFIGFMPFF). The Lumenal portion of the chain corresponds to 110 to 451 (SVDVSQKIVS…KNLDAVIPVT (342 aa)). 2 N-linked (GlcNAc...) asparagine glycosylation sites follow: Asn260 and Asn366.

It belongs to the glycosyltransferase 43 family.

The protein resides in the golgi apparatus membrane. Its function is as follows. Probable beta-1,4-xylosyltransferase involved in xylan biosynthesis in cell walls. This Oryza sativa subsp. japonica (Rice) protein is Probable beta-1,4-xylosyltransferase GT43E.